The sequence spans 184 residues: Endoribonuclease YbeY (184 aa).

Histidine 151, histidine 155, and histidine 161 together coordinate Zn(2+).

It belongs to the endoribonuclease YbeY family. Zn(2+) is required as a cofactor.

It localises to the cytoplasm. Single strand-specific metallo-endoribonuclease involved in late-stage 70S ribosome quality control and in maturation of the 3' terminus of the 16S rRNA. This Prochlorococcus marinus (strain NATL2A) protein is Endoribonuclease YbeY.